The following is a 485-amino-acid chain: Glutamyl-tRNA(Gln) amidotransferase subunit A (485 aa).

Active-site charge relay system residues include Lys82 and Ser157. The active-site Acyl-ester intermediate is Ser181.

Belongs to the amidase family. GatA subfamily. In terms of assembly, heterotrimer of A, B and C subunits.

The enzyme catalyses L-glutamyl-tRNA(Gln) + L-glutamine + ATP + H2O = L-glutaminyl-tRNA(Gln) + L-glutamate + ADP + phosphate + H(+). Functionally, allows the formation of correctly charged Gln-tRNA(Gln) through the transamidation of misacylated Glu-tRNA(Gln) in organisms which lack glutaminyl-tRNA synthetase. The reaction takes place in the presence of glutamine and ATP through an activated gamma-phospho-Glu-tRNA(Gln). This Treponema denticola (strain ATCC 35405 / DSM 14222 / CIP 103919 / JCM 8153 / KCTC 15104) protein is Glutamyl-tRNA(Gln) amidotransferase subunit A.